The sequence spans 310 residues: Protoheme IX farnesyltransferase 2 (310 aa).

9 consecutive transmembrane segments (helical) span residues 25-45 (PGIIFGNLISVAGGFLLAAKG), 49-69 (LVLMLASLVGLSLVVASGCAI), 98-118 (HVLLFGIALGVLGFGILALFT), 121-141 (LALLFAAIGYVVYVGIYSLYM), 145-165 (SVYGTLVGSFSGAVPPVVGYC), 176-196 (VILLLMFSLWQMPHSYAIAIF), 222-242 (IVLYIAVFALVSTMLPLAGYT), 245-265 (AFMAVTCATSLWWLTMALKGY), and 277-297 (QVFGFSIITITALSVTMALDF).

Belongs to the UbiA prenyltransferase family. Protoheme IX farnesyltransferase subfamily.

Its subcellular location is the cell inner membrane. It carries out the reaction heme b + (2E,6E)-farnesyl diphosphate + H2O = Fe(II)-heme o + diphosphate. The protein operates within porphyrin-containing compound metabolism; heme O biosynthesis; heme O from protoheme: step 1/1. Its function is as follows. Converts heme B (protoheme IX) to heme O by substitution of the vinyl group on carbon 2 of heme B porphyrin ring with a hydroxyethyl farnesyl side group. This is Protoheme IX farnesyltransferase 2 from Shewanella sp. (strain MR-4).